We begin with the raw amino-acid sequence, 625 residues long: Probable potassium transport system protein Kup 1 (625 aa).

12 helical membrane passes run 14–34, 50–70, 104–124, 139–159, 170–190, 213–233, 249–269, 287–307, 339–359, 368–388, 396–416, and 421–441; these read LSLL…TSPL, AAAV…ITTV, IVAL…ITPA, PALQ…LFAI, LFGP…LVGI, GATG…AEAL, WFAV…ALVI, LLLP…QSVI, IYVG…TIGF, AYGI…FIAM, LLAA…FFLA, and IAEG…LMWI.

Belongs to the HAK/KUP transporter (TC 2.A.72) family.

Its subcellular location is the cell inner membrane. It catalyses the reaction K(+)(in) + H(+)(in) = K(+)(out) + H(+)(out). Transport of potassium into the cell. Likely operates as a K(+):H(+) symporter. This is Probable potassium transport system protein Kup 1 from Bradyrhizobium sp. (strain ORS 278).